Consider the following 997-residue polypeptide: Serine-repeat antigen protein 5 (997 aa).

Positions 1–22 are cleaved as a signal peptide; the sequence is MKSYISLFFILCVIFNKNVIKC. Disordered stretches follow at residues 26–107 and 181–252; these read SQTG…EKQD and LPSN…PRNL. Gly residues predominate over residues 30–51; that stretch reads NTGGGQAGNTGGDQAGSTGGSP. Residues 52–67 are compositionally biased toward low complexity; sequence QGSTGASPQGSTGASP. Positions 68–84 are enriched in polar residues; that stretch reads QGSTGASQPGSSEPSNP. Low complexity-rich tracts occupy residues 85–103, 183–196, and 205–235; these read VSSG…STSS, SNGT…STGT, and SDSS…SSES. Ser183 bears the Phosphoserine mark. Asn184 carries N-linked (GlcNAc...) asparagine glycosylation. An interaction with PTKL region spans residues 216 to 253; sequence SSSSSSSSSSSSSSSSSSESLPANGPDSPTVKPPRNLQ. A glycan (N-linked (GlcNAc...) asparagine) is linked at Asn318. The tract at residues 373–390 is interaction with host VTN; sequence YKYLSEDIVSKFKEIKAE. A disulfide bridge connects residues Cys445 and Cys497. Position 549 is a phosphothreonine; by CPK1 (Thr549). Intrachain disulfides connect Cys567–Cys572, Cys581–Cys610, Cys593–Cys636, Cys627–Cys672, and Cys755–Cys809. A thiol-protease-like region spans residues 579 to 997; the sequence is NNCISNLQVE…TNNECYFCYV (419 aa). Residues His762 and Asn787 contribute to the active site. Asn828 carries an N-linked (GlcNAc...) asparagine glycan. Residues 843 to 886 constitute a propeptide, inhibition peptide; it reads KASPEFYHNLYFKNFNVGKKNLFSEKEDNENNKKLGNNYIIFGQ. Ser866 carries the post-translational modification Phosphoserine.

The protein belongs to the peptidase C1 family. May interact (via C-terminus) with PTKL (via SAM domain). As to quaternary structure, interacts (via C-terminus) with human VTN (via hemopexin repeat 2); may form heterotetramers of two VTN and SERA5 P47 heterodimers; the interaction may protect merozoites from phagocytosis by host monocytes; VTN glycosylation appears to be dispensable for the interaction. In terms of assembly, monomer. Interacts with kinase CPK1/CDPK1 at the schizont stage. In terms of processing, phosphorylation by CPK1/CDPK1 increases SERA5 protease activity towards a synthetic peptide in vitro. Just prior to merozoite egress from host erythrocytes, proteolytically cleaved into multiple fragments. Cleaved by SUB1 into p47 and p73, p73 is further cleaved by SUB1 into p56 and p18 and p56 is further processed into p50 by an unidentified protease. p47 remains covalently associated with p18 via disulfide bond. p47 can be processed into p25n and p25c by SUB1. p25c and p25n remain associated with p18. Proteolytic processing is essential for merozoite egress from host erythrocytes. The cleavage of the propeptide to produce p50 is necessary for protease activity and to promote merozoite egress.

Its subcellular location is the parasitophorous vacuole. It localises to the secreted. The protein resides in the cell membrane. Functionally, plays an essential role during the asexual blood stage development by controlling the kinetics of merozoite egress from host erythrocytes. Specifically, prevents premature rupture of the parasitophorous vacuole and host erythrocyte membranes. In terms of biological role, may prevent merozoite phagocytosis by host monocytes via interaction with host VTN at the merozoite surface. Plays a role in parasite growth. Protease activity is controversial. Has been shown in a number of studies to have protease activity towards a synthetic peptide in vitro. Has also been shown to lack protease activity towards a synthetic peptide in vitro. In Plasmodium falciparum (isolate 3D7), this protein is Serine-repeat antigen protein 5.